The chain runs to 114 residues: SCP2 domain-containing protein YusD (114 aa).

An SCP2 domain is found at 21–101; it reads NASTLLITFQ…RALLKLEAIL (81 aa).

This Bacillus subtilis (strain 168) protein is SCP2 domain-containing protein YusD (yusD).